A 114-amino-acid polypeptide reads, in one-letter code: NADH-ubiquinone oxidoreductase chain 3 (114 aa).

3 consecutive transmembrane segments (helical) span residues 3 to 23 (LITLIIMAMAMTTALYTINTY), 52 to 72 (IQFFLVAILFILFDLEIVLLL), and 86 to 106 (TILLITMLLTILTLGLLYEWL).

This sequence belongs to the complex I subunit 3 family.

It is found in the mitochondrion membrane. The catalysed reaction is a ubiquinone + NADH + 5 H(+)(in) = a ubiquinol + NAD(+) + 4 H(+)(out). Functionally, core subunit of the mitochondrial membrane respiratory chain NADH dehydrogenase (Complex I) that is believed to belong to the minimal assembly required for catalysis. Complex I functions in the transfer of electrons from NADH to the respiratory chain. The immediate electron acceptor for the enzyme is believed to be ubiquinone. This Lycodon semicarinatus (Ryukyu odd-tooth snake) protein is NADH-ubiquinone oxidoreductase chain 3 (MT-ND3).